The following is an 86-amino-acid chain: MSIFNLFRRPTSAPMARERLQVLLAHERAAQGSDLVAILREEILAVISKHVQVDADKVRIKVDRDEHVSILEIDVEIPRDAQALAA.

This sequence belongs to the MinE family.

Prevents the cell division inhibition by proteins MinC and MinD at internal division sites while permitting inhibition at polar sites. This ensures cell division at the proper site by restricting the formation of a division septum at the midpoint of the long axis of the cell. This is Cell division topological specificity factor from Allorhizobium ampelinum (strain ATCC BAA-846 / DSM 112012 / S4) (Agrobacterium vitis (strain S4)).